The following is a 253-amino-acid chain: Phosphate import ATP-binding protein PstB (253 aa).

In terms of domain architecture, ABC transporter spans 7 to 248 (IKVRDLNLYY…PRDRRTEDYI (242 aa)). ATP is bound at residue 39–46 (GPSGCGKS).

This sequence belongs to the ABC transporter superfamily. Phosphate importer (TC 3.A.1.7) family. In terms of assembly, the complex is composed of two ATP-binding proteins (PstB), two transmembrane proteins (PstC and PstA) and a solute-binding protein (PstS).

Its subcellular location is the cell membrane. It carries out the reaction phosphate(out) + ATP + H2O = ADP + 2 phosphate(in) + H(+). In terms of biological role, part of the ABC transporter complex PstSACB involved in phosphate import. Responsible for energy coupling to the transport system. This is Phosphate import ATP-binding protein PstB from Carboxydothermus hydrogenoformans (strain ATCC BAA-161 / DSM 6008 / Z-2901).